A 733-amino-acid chain; its full sequence is Phosphoribosylformylglycinamidine synthase subunit PurL (733 aa).

H41 is an active-site residue. The ATP site is built by Y44 and K83. Residue E85 participates in Mg(2+) binding. Substrate-binding positions include 86 to 89 (SHNH) and R108. The active-site Proton acceptor is H87. Residue D109 participates in Mg(2+) binding. The tract at residues 212–232 (GASFASQELSEESEEKRPSVQ) is disordered. Residue Q232 participates in substrate binding. Position 260 (D260) interacts with Mg(2+). Residue 304 to 306 (ESQ) coordinates substrate. Residues D488 and G525 each coordinate ATP. Position 526 (N526) interacts with Mg(2+). Residue S528 coordinates substrate.

Belongs to the FGAMS family. Monomer. Part of the FGAM synthase complex composed of 1 PurL, 1 PurQ and 2 PurS subunits.

The protein resides in the cytoplasm. It carries out the reaction N(2)-formyl-N(1)-(5-phospho-beta-D-ribosyl)glycinamide + L-glutamine + ATP + H2O = 2-formamido-N(1)-(5-O-phospho-beta-D-ribosyl)acetamidine + L-glutamate + ADP + phosphate + H(+). The protein operates within purine metabolism; IMP biosynthesis via de novo pathway; 5-amino-1-(5-phospho-D-ribosyl)imidazole from N(2)-formyl-N(1)-(5-phospho-D-ribosyl)glycinamide: step 1/2. Part of the phosphoribosylformylglycinamidine synthase complex involved in the purines biosynthetic pathway. Catalyzes the ATP-dependent conversion of formylglycinamide ribonucleotide (FGAR) and glutamine to yield formylglycinamidine ribonucleotide (FGAM) and glutamate. The FGAM synthase complex is composed of three subunits. PurQ produces an ammonia molecule by converting glutamine to glutamate. PurL transfers the ammonia molecule to FGAR to form FGAM in an ATP-dependent manner. PurS interacts with PurQ and PurL and is thought to assist in the transfer of the ammonia molecule from PurQ to PurL. This Thermoanaerobacter pseudethanolicus (strain ATCC 33223 / 39E) (Clostridium thermohydrosulfuricum) protein is Phosphoribosylformylglycinamidine synthase subunit PurL.